The primary structure comprises 335 residues: Photosystem II assembly lipoprotein Ycf48 (335 aa).

Residues 1–23 (MSRLFSNLFNLLLIAAIGFGLSG) form the signal peptide. The N-palmitoyl cysteine moiety is linked to residue Cys24. The S-diacylglycerol cysteine moiety is linked to residue Cys24.

The protein belongs to the Ycf48 family. In terms of assembly, part of early PSII assembly complexes which includes D1 (psbA) and PsbI; not found in mature PSII. Binds to the lumenal side of PSII complexes. Interacts with YidC.

It is found in the cellular thylakoid membrane. A factor required for optimal assembly of photosystem II (PSII), acting in the early stages of PSII assembly. Also plays a role in replacement of photodamaged D1 (psbA). Assists YidC in synthesis of chlorophyll-binding proteins. In Prochlorococcus marinus (strain MIT 9313), this protein is Photosystem II assembly lipoprotein Ycf48.